The primary structure comprises 299 residues: ATP phosphoribosyltransferase (299 aa).

It belongs to the ATP phosphoribosyltransferase family. Long subfamily. Equilibrium between an active dimeric form, an inactive hexameric form and higher aggregates. Interconversion between the various forms is largely reversible and is influenced by the natural substrates and inhibitors of the enzyme. Mg(2+) serves as cofactor.

It localises to the cytoplasm. It catalyses the reaction 1-(5-phospho-beta-D-ribosyl)-ATP + diphosphate = 5-phospho-alpha-D-ribose 1-diphosphate + ATP. It functions in the pathway amino-acid biosynthesis; L-histidine biosynthesis; L-histidine from 5-phospho-alpha-D-ribose 1-diphosphate: step 1/9. Its activity is regulated as follows. Feedback inhibited by histidine. Its function is as follows. Catalyzes the condensation of ATP and 5-phosphoribose 1-diphosphate to form N'-(5'-phosphoribosyl)-ATP (PR-ATP). Has a crucial role in the pathway because the rate of histidine biosynthesis seems to be controlled primarily by regulation of HisG enzymatic activity. The polypeptide is ATP phosphoribosyltransferase (Escherichia coli O17:K52:H18 (strain UMN026 / ExPEC)).